We begin with the raw amino-acid sequence, 324 residues long: o-succinylbenzoate synthase (324 aa).

Lysine 135 functions as the Proton donor in the catalytic mechanism. Residues aspartate 163, glutamate 192, and aspartate 215 each coordinate Mg(2+). Catalysis depends on lysine 237, which acts as the Proton acceptor.

It belongs to the mandelate racemase/muconate lactonizing enzyme family. MenC type 1 subfamily. The cofactor is a divalent metal cation.

The catalysed reaction is (1R,6R)-6-hydroxy-2-succinyl-cyclohexa-2,4-diene-1-carboxylate = 2-succinylbenzoate + H2O. It functions in the pathway quinol/quinone metabolism; 1,4-dihydroxy-2-naphthoate biosynthesis; 1,4-dihydroxy-2-naphthoate from chorismate: step 4/7. The protein operates within quinol/quinone metabolism; menaquinone biosynthesis. In terms of biological role, converts 2-succinyl-6-hydroxy-2,4-cyclohexadiene-1-carboxylate (SHCHC) to 2-succinylbenzoate (OSB). The sequence is that of o-succinylbenzoate synthase from Aliivibrio salmonicida (strain LFI1238) (Vibrio salmonicida (strain LFI1238)).